We begin with the raw amino-acid sequence, 380 residues long: Glutamate 5-kinase (380 aa).

Residue K20 coordinates ATP. Positions 59, 146, and 158 each coordinate substrate. Residue 220-226 (TGGMYSK) coordinates ATP. The region spanning 285–363 (SGTVTVDEGA…HEVAAILGDA (79 aa)) is the PUA domain.

Belongs to the glutamate 5-kinase family.

Its subcellular location is the cytoplasm. The enzyme catalyses L-glutamate + ATP = L-glutamyl 5-phosphate + ADP. The protein operates within amino-acid biosynthesis; L-proline biosynthesis; L-glutamate 5-semialdehyde from L-glutamate: step 1/2. Functionally, catalyzes the transfer of a phosphate group to glutamate to form L-glutamate 5-phosphate. The polypeptide is Glutamate 5-kinase (Nitratidesulfovibrio vulgaris (strain ATCC 29579 / DSM 644 / CCUG 34227 / NCIMB 8303 / VKM B-1760 / Hildenborough) (Desulfovibrio vulgaris)).